The chain runs to 267 residues: Transcription factor HES-1 (267 aa).

The segment at 1–45 (MPADLMEKNSSSPVAATPASMSNTPDKPKTASEHRKSSKPIMEKR) is disordered. Over residues 8–25 (KNSSSPVAATPASMSNTP) the composition is skewed to polar residues. A compositionally biased stretch (basic and acidic residues) spans 26-35 (DKPKTASEHR). One can recognise a bHLH domain in the interval 34-91 (HRKSSKPIMEKRRRARINESLGQLKTLILDALKKDSSRHSKLEKADILEMTVKHLRNL). The Orange domain occupies 110–143 (YRAGFSECMNEVTRFLSTCEGVNTDVRTRLLGHL). The WRPW motif motif lies at 264-267 (WRPW).

In terms of assembly, transcription repression requires formation of a complex with a corepressor protein of the Groucho/TLE family. Interacts with the bHLH protein hes2, and binds DNA in the form of a heterodimer with the bHLH protein hey1/hrt1. Interacts with the bHLH protein hes6; this interaction may inhibit the transcriptional repressor activity.

It is found in the nucleus. In terms of biological role, transcriptional repressor of a subset of early mesodermal genes including myod1 and t/bra. Binds DNA on N-box motifs: 5'-CACNAG-3'. Acts as a negative regulator of myogenesis, mediating Notch signaling to repress expression of myod1. The sequence is that of Transcription factor HES-1 from Xenopus tropicalis (Western clawed frog).